A 97-amino-acid polypeptide reads, in one-letter code: Large ribosomal subunit protein eL21 (97 aa).

It belongs to the eukaryotic ribosomal protein eL21 family.

This chain is Large ribosomal subunit protein eL21, found in Methanosarcina barkeri (strain Fusaro / DSM 804).